We begin with the raw amino-acid sequence, 342 residues long: Trans-3-hydroxy-L-proline dehydratase (342 aa).

Serine 90 (proton acceptor) is an active-site residue. Substrate contacts are provided by residues 91–92 (GS), aspartate 252, and 257–258 (GT).

Belongs to the proline racemase family.

The catalysed reaction is trans-3-hydroxy-L-proline = 1-pyrroline-2-carboxylate + H2O. The enzyme catalyses trans-4-hydroxy-L-proline = cis-4-hydroxy-D-proline. Functionally, catalyzes the dehydration of trans-3-hydroxy-L-proline (t3LHyp) to Delta(1)-pyrroline-2-carboxylate (Pyr2C). Can also catalyze the epimerization of trans-4-hydroxy-L-proline (t4LHyp) to cis-4-hydroxy-D-proline (c4DHyp), albeit with 30-fold lower efficiency. Is likely involved in both degradation pathways that convert t3LHyp to L-proline and t4LHyp to alpha-ketoglutarate, which would allow A.tumefaciens to grow on t3LHyp or t4LHyp as a sole carbon source. Displays no proline racemase activity. The sequence is that of Trans-3-hydroxy-L-proline dehydratase from Agrobacterium fabrum (strain C58 / ATCC 33970) (Agrobacterium tumefaciens (strain C58)).